The chain runs to 677 residues: AP-2 complex subunit beta (677 aa).

The disordered stretch occupies residues Arg-597–Asp-677. Over residues Lys-616–Thr-627 the composition is skewed to basic residues. Residues Arg-636–Ser-654 show a composition bias toward polar residues.

The protein belongs to the adaptor complexes large subunit family. As to quaternary structure, adaptor protein complex 2 (AP-2) is a heterotetramer composed of two large adaptins (alpha-type subunit apl3 and beta-type subunit apl1), a medium chain (mu-type subunit apm4) and a small adaptin (sigma-type subunit aps2).

It localises to the cell membrane. It is found in the membrane. The protein resides in the coated pit. Its function is as follows. Adaptins are components of the adaptor complexes which link clathrin to receptors in coated vesicles. Clathrin-associated protein complexes are believed to interact with the cytoplasmic tails of membrane proteins, leading to their selection and concentration. Beta adaptin is a subunit of the plasma membrane adaptor. The polypeptide is AP-2 complex subunit beta (apl1) (Schizosaccharomyces pombe (strain 972 / ATCC 24843) (Fission yeast)).